The following is a 232-amino-acid chain: 7-cyano-7-deazaguanine synthase (232 aa).

Residue phenylalanine 8–leucine 18 participates in ATP binding. Cysteine 187, cysteine 196, cysteine 199, and cysteine 202 together coordinate Zn(2+).

Belongs to the QueC family. It depends on Zn(2+) as a cofactor.

It carries out the reaction 7-carboxy-7-deazaguanine + NH4(+) + ATP = 7-cyano-7-deazaguanine + ADP + phosphate + H2O + H(+). The protein operates within purine metabolism; 7-cyano-7-deazaguanine biosynthesis. Catalyzes the ATP-dependent conversion of 7-carboxy-7-deazaguanine (CDG) to 7-cyano-7-deazaguanine (preQ(0)). The protein is 7-cyano-7-deazaguanine synthase of Vibrio vulnificus (strain YJ016).